We begin with the raw amino-acid sequence, 259 residues long: Adenosylcobinamide-GDP ribazoletransferase (259 aa).

A run of 6 helical transmembrane segments spans residues Ala-37–Ser-57, Val-58–Leu-78, Ala-118–Phe-138, Val-143–Phe-163, Ala-195–Leu-215, and Leu-237–Ala-257.

Belongs to the CobS family. It depends on Mg(2+) as a cofactor.

The protein resides in the cell inner membrane. The enzyme catalyses alpha-ribazole + adenosylcob(III)inamide-GDP = adenosylcob(III)alamin + GMP + H(+). The catalysed reaction is alpha-ribazole 5'-phosphate + adenosylcob(III)inamide-GDP = adenosylcob(III)alamin 5'-phosphate + GMP + H(+). Its pathway is cofactor biosynthesis; adenosylcobalamin biosynthesis; adenosylcobalamin from cob(II)yrinate a,c-diamide: step 7/7. Joins adenosylcobinamide-GDP and alpha-ribazole to generate adenosylcobalamin (Ado-cobalamin). Also synthesizes adenosylcobalamin 5'-phosphate from adenosylcobinamide-GDP and alpha-ribazole 5'-phosphate. The polypeptide is Adenosylcobinamide-GDP ribazoletransferase (Shewanella piezotolerans (strain WP3 / JCM 13877)).